The primary structure comprises 444 residues: Adenylosuccinate synthetase (444 aa).

GTP contacts are provided by residues 12–18 (GDEGKGK) and 40–42 (GHT). Asp13 acts as the Proton acceptor in catalysis. Residues Asp13 and Gly40 each contribute to the Mg(2+) site. IMP-binding positions include 13–16 (DEGK), 38–41 (NAGH), Thr128, Arg142, Gln223, Thr238, and Arg302. Residue His41 is the Proton donor of the active site. 298-304 (TTTGRRR) is a substrate binding site. GTP contacts are provided by residues Arg304, 330–332 (KLD), and 412–414 (SLG).

This sequence belongs to the adenylosuccinate synthetase family. In terms of assembly, homodimer. Mg(2+) is required as a cofactor.

It is found in the cytoplasm. It carries out the reaction IMP + L-aspartate + GTP = N(6)-(1,2-dicarboxyethyl)-AMP + GDP + phosphate + 2 H(+). Its pathway is purine metabolism; AMP biosynthesis via de novo pathway; AMP from IMP: step 1/2. In terms of biological role, plays an important role in the de novo pathway of purine nucleotide biosynthesis. Catalyzes the first committed step in the biosynthesis of AMP from IMP. This Synechococcus sp. (strain ATCC 27144 / PCC 6301 / SAUG 1402/1) (Anacystis nidulans) protein is Adenylosuccinate synthetase.